The primary structure comprises 326 residues: tRNA dimethylallyltransferase (326 aa).

18-25 (GPTASGKS) contacts ATP. Residue 20–25 (TASGKS) coordinates substrate. 2 interaction with substrate tRNA regions span residues 43 to 46 (DSMQ) and 167 to 171 (QRIAR).

The protein belongs to the IPP transferase family. In terms of assembly, monomer. It depends on Mg(2+) as a cofactor.

The catalysed reaction is adenosine(37) in tRNA + dimethylallyl diphosphate = N(6)-dimethylallyladenosine(37) in tRNA + diphosphate. Catalyzes the transfer of a dimethylallyl group onto the adenine at position 37 in tRNAs that read codons beginning with uridine, leading to the formation of N6-(dimethylallyl)adenosine (i(6)A). The polypeptide is tRNA dimethylallyltransferase (Rhodospirillum rubrum (strain ATCC 11170 / ATH 1.1.1 / DSM 467 / LMG 4362 / NCIMB 8255 / S1)).